A 331-amino-acid polypeptide reads, in one-letter code: 3-dehydrosphinganine reductase TSC10B (331 aa).

At Met-1 to Leu-7 the chain is on the lumenal side. Residues Phe-8–Pro-28 traverse the membrane as a helical segment. Residues Arg-29–Lys-262 lie on the Cytoplasmic side of the membrane. NADPH is bound by residues Gly-44, Ser-46, Ser-47, Gly-48, Arg-69, Lys-73, and Asp-95. The GXSXG motif lies at Gly-44–Gly-48. Ser-172 serves as the catalytic Proton donor. The active-site Proton acceptor is Tyr-186. Positions 186 and 190 each coordinate NADP(+). Lys-190 (lowers pKa of active site Tyr) is an active-site residue. A helical membrane pass occupies residues Phe-263 to Pro-283. Topologically, residues Gln-284–Ser-286 are lumenal. A helical transmembrane segment spans residues Phe-287 to Phe-307. Topologically, residues Gln-308–Ala-331 are cytoplasmic.

This sequence belongs to the short-chain dehydrogenases/reductases (SDR) family. As to expression, expressed in roots, leaves, stems and flowers.

Its subcellular location is the endoplasmic reticulum membrane. The catalysed reaction is sphinganine + NADP(+) = 3-oxosphinganine + NADPH + H(+). It functions in the pathway lipid metabolism; sphingolipid metabolism. Catalyzes the reduction of 3'-oxosphinganine (3-ketodihydrosphingosine/KDS) to sphinganine (dihydrosphingosine/DHS), the second step of de novo sphingolipid biosynthesis. In plants, sphingolipids seems to play a critical role in mineral ion homeostasis, most likely through their involvement in the ion transport functionalities of membrane systems in the root. Is stereospecific for D-erythro-DHS production and does not produce L-threo-DHS. This is 3-dehydrosphinganine reductase TSC10B (TSC10B) from Arabidopsis thaliana (Mouse-ear cress).